The primary structure comprises 425 residues: Monoacylglycerol lipase ABHD2 (425 aa).

Topologically, residues 1–9 are cytoplasmic; sequence MNAMLETPE. A helical; Signal-anchor for type II membrane protein transmembrane segment spans residues 10 to 30; sequence LPAVFDGVKLAAVAAVLYVIV. The Extracellular portion of the chain corresponds to 31 to 425; it reads RCLNLKSPTA…DTEQVEADLE (395 aa). The 255-residue stretch at 128-382 folds into the AB hydrolase-1 domain; sequence MVICPGIANH…HGGHLGFFEG (255 aa). Residue asparagine 136 is glycosylated (N-linked (GlcNAc...) asparagine). Serine 207 serves as the catalytic Nucleophile. Catalysis depends on charge relay system residues aspartate 345 and histidine 376.

Belongs to the AB hydrolase superfamily. AB hydrolase 4 family. Present in sperm (at protein level).

The protein localises to the cell projection. It localises to the cilium. It is found in the flagellum membrane. The protein resides in the cell membrane. The catalysed reaction is an acetyl ester + H2O = an aliphatic alcohol + acetate + H(+). It catalyses the reaction Hydrolyzes glycerol monoesters of long-chain fatty acids.. It carries out the reaction a triacylglycerol + H2O = a diacylglycerol + a fatty acid + H(+). The enzyme catalyses 2-(5Z,8Z,11Z,14Z-eicosatetraenoyl)-glycerol + H2O = glycerol + (5Z,8Z,11Z,14Z)-eicosatetraenoate + H(+). The catalysed reaction is a butanoate ester + H2O = an aliphatic alcohol + butanoate + H(+). It catalyses the reaction hexadecanoate ester + H2O = an aliphatic alcohol + hexadecanoate + H(+). Its activity is regulated as follows. Acylglycerol lipase activity is activated upon binding to progesterone. Its function is as follows. Progesterone-dependent acylglycerol lipase that catalyzes hydrolysis of endocannabinoid arachidonoylglycerol (AG) from cell membrane. Acts as a progesterone receptor: progesterone-binding activates the acylglycerol lipase activity, mediating degradation of 1-arachidonoylglycerol (1AG) and 2-arachidonoylglycerol (2AG) to glycerol and arachidonic acid (AA). Also displays an ester hydrolase activity against acetyl ester, butanoate ester and hexadecanoate ester. Plays a key role in sperm capacitation in response to progesterone by mediating degradation of 2AG, an inhibitor of the sperm calcium channel CatSper, leading to calcium influx via CatSper and sperm activation. May also play a role in smooth muscle cells migration. In Homo sapiens (Human), this protein is Monoacylglycerol lipase ABHD2.